The chain runs to 257 residues: tRNA (guanine-N(1)-)-methyltransferase (257 aa).

Residues G117 and 137-142 each bind S-adenosyl-L-methionine; that span reads LGDFVL.

Belongs to the RNA methyltransferase TrmD family. As to quaternary structure, homodimer.

It is found in the cytoplasm. The enzyme catalyses guanosine(37) in tRNA + S-adenosyl-L-methionine = N(1)-methylguanosine(37) in tRNA + S-adenosyl-L-homocysteine + H(+). Functionally, specifically methylates guanosine-37 in various tRNAs. This is tRNA (guanine-N(1)-)-methyltransferase from Bordetella pertussis (strain Tohama I / ATCC BAA-589 / NCTC 13251).